A 682-amino-acid chain; its full sequence is Transcription factor 12 (682 aa).

The short motif at 19–27 is the 9aaTAD element; the sequence is DLLDFSAMF. Disordered stretches follow at residues 25-122, 140-219, and 281-313; these read AMFS…LYSR, LGSP…PPTS, and SVSPTDINTSLPPMSSFHRGSTSSSPYVAASHT. Polar residues-rich tracts occupy residues 30-48 and 56-76; these read PVNSGKTRPTTLGSSQFSG and GTTSWGTSGQPSPSYDSSRGF. Ser-47, Ser-67, and Ser-79 each carry phosphoserine. A compositionally biased stretch (basic and acidic residues) spans 81-93; it reads HYSDHLNDSRLGA. Ser-98 is modified (phosphoserine). Composition is skewed to polar residues over residues 101–121 and 144–163; these read PFMNSNLMGKTSERGSFSLYS and AQLSSSGKPGTAYYSFSATS. Lys-110 participates in a covalent cross-link: Glycyl lysine isopeptide (Lys-Gly) (interchain with G-Cter in SUMO2). Ser-116 carries the phosphoserine modification. The interval 119 to 140 is leucine-zipper; it reads LYSRDTGLPGCQSSLLRQDLGL. Lys-181 is covalently cross-linked (Glycyl lysine isopeptide (Lys-Gly) (interchain with G-Cter in SUMO2)). The interval 182 to 196 is interaction with RUNX1T1; the sequence is KVRKVPPGLPSSVYA. The span at 282 to 306 shows a compositional bias: polar residues; the sequence is VSPTDINTSLPPMSSFHRGSTSSSP. Thr-313 carries the phosphothreonine modification. Phosphoserine is present on Ser-333. Disordered stretches follow at residues 349–395 and 462–580; these read PDHT…SLHS and SASM…ERRM. The span at 352 to 363 shows a compositional bias: low complexity; the sequence is TSSSFPSNPSTP. Polar residues-rich tracts occupy residues 364–376 and 383–395; these read VGSPSPLTGTSQW and APSSPSYENSLHS. Positions 481–492 are enriched in low complexity; it reads SVLSSTVTTSST. The span at 506 to 517 shows a compositional bias: polar residues; it reads LQSQSGTVVTTE. Basic and acidic residues-rich tracts occupy residues 518–530 and 536–551; these read IKTENKEKDENLH and DDMKSDDESSQKDIKV. Lys-519 participates in a covalent cross-link: Glycyl lysine isopeptide (Lys-Gly) (interchain with G-Cter in SUMO2). Phosphoserine is present on Ser-540. A Glycyl lysine isopeptide (Lys-Gly) (interchain with G-Cter in SUMO2) cross-link involves residue Lys-550. Phosphothreonine is present on Thr-557. Ser-558 and Ser-559 each carry phosphoserine. The segment covering 568–580 has biased composition (basic and acidic residues); that stretch reads PEQKIEREKERRM. One can recognise a bHLH domain in the interval 577–630; the sequence is ERRMANNARERLRVRDINEAFKELGRMCQLHLKSEKPQTKLLILHQAVAVILSL. Residues Lys-609 and Lys-653 each participate in a glycyl lysine isopeptide (Lys-Gly) (interchain with G-Cter in SUMO2) cross-link. Residues 632 to 655 are class A specific domain; the sequence is QQVRERNLNPKAACLKRREEEKVS. The interval 651–682 is disordered; sequence EEKVSAVSAEPPTTLPGTHPGLSETTNPMGHM. Residues 661 to 672 show a composition bias toward low complexity; it reads PPTTLPGTHPGL. Polar residues predominate over residues 673 to 682; it reads SETTNPMGHM.

As to quaternary structure, efficient DNA binding requires dimerization with another bHLH protein. Forms homo- or heterooligomers with myogenin, E12 and ITF2 proteins. Interacts with PTF1A. Interacts with NEUROD2. Interacts with RUNX1T1. Interacts with AML1-MTG8/ETO (via nervy homology region 2 in oligomerized form). Interacts with BHLHA9. As to expression, expressed in several tissues and cell types including skeletal muscle, thymus, and a B-cell line.

The protein resides in the nucleus. Functionally, transcriptional regulator. Involved in the initiation of neuronal differentiation. Activates transcription by binding to the E box (5'-CANNTG-3'). May be involved in the functional network that regulates the development of the GnRH axis. The polypeptide is Transcription factor 12 (TCF12) (Homo sapiens (Human)).